The chain runs to 241 residues: uncharacterized protein (241 aa).

Helical transmembrane passes span 7–27 (LIFL…WSVF), 37–57 (LFLL…LLLI), 72–92 (IIAL…SGFG), 110–130 (INLV…YVAF), and 138–158 (FGTL…IKII).

The protein resides in the cell membrane. This is an uncharacterized protein from Methanocaldococcus jannaschii (strain ATCC 43067 / DSM 2661 / JAL-1 / JCM 10045 / NBRC 100440) (Methanococcus jannaschii).